A 298-amino-acid chain; its full sequence is Ribosomal RNA small subunit methyltransferase H (298 aa).

S-adenosyl-L-methionine-binding positions include 46–48, aspartate 65, phenylalanine 92, aspartate 108, and histidine 115; that span reads GGH.

Belongs to the methyltransferase superfamily. RsmH family.

The protein localises to the cytoplasm. It catalyses the reaction cytidine(1402) in 16S rRNA + S-adenosyl-L-methionine = N(4)-methylcytidine(1402) in 16S rRNA + S-adenosyl-L-homocysteine + H(+). In terms of biological role, specifically methylates the N4 position of cytidine in position 1402 (C1402) of 16S rRNA. The chain is Ribosomal RNA small subunit methyltransferase H from Nostoc punctiforme (strain ATCC 29133 / PCC 73102).